We begin with the raw amino-acid sequence, 250 residues long: Golgi SNAP receptor complex member 1 (250 aa).

A2 is subject to N-acetylalanine. At 2–229 (AAGTSNYWED…QRINLRKRRD (228 aa)) the chain is on the cytoplasmic side. Positions 9 to 30 (WEDLRKQARQLENELDLKLVSF) form a coiled coil. Residues 38 to 59 (SHSSARDGGRDRYSSDTTPLLN) are disordered. A compositionally biased stretch (basic and acidic residues) spans 41 to 51 (SARDGGRDRYS). Residues 68 to 95 (ETMAIEIEQLLARLTGVNDKMAEYTNSA) are a coiled coil. S141 carries the phosphoserine modification. A helical; Anchor for type IV membrane protein transmembrane segment spans residues 230–250 (SLILGGVIGICTILLLLYAFH).

Belongs to the GOSR1 family. In terms of assembly, component of several multiprotein Golgi SNARE complexes. Identified in a SNARE complex with BET1, STX5 and YKT6, in a SNARE complex with BET1L, STX5 and YKT6, in a SNARE complex with STX5, GOSR2, SEC22B and BET1, and in complex with STX5 and COG3. Interacts with GABARAPL2.

It localises to the golgi apparatus membrane. In terms of biological role, involved in transport from the ER to the Golgi apparatus as well as in intra-Golgi transport. It belongs to a super-family of proteins called t-SNAREs or soluble NSF (N-ethylmaleimide-sensitive factor) attachment protein receptor. May play a protective role against hydrogen peroxide induced cytotoxicity under glutathione depleted conditions in neuronal cells by regulating the intracellular ROS levels via inhibition of p38 MAPK (MAPK11, MAPK12, MAPK13 and MAPK14). Participates in docking and fusion stage of ER to cis-Golgi transport. Plays an important physiological role in VLDL-transport vesicle-Golgi fusion and thus in VLDL delivery to the hepatic cis-Golgi. The chain is Golgi SNAP receptor complex member 1 (GOSR1) from Cricetulus griseus (Chinese hamster).